A 289-amino-acid polypeptide reads, in one-letter code: uncharacterized protein (289 aa).

Residue E48 is part of the active site.

It belongs to the PhzF family.

This is an uncharacterized protein from Pasteurella multocida (strain Pm70).